The sequence spans 130 residues: Small ribosomal subunit protein uS11c (130 aa).

Belongs to the universal ribosomal protein uS11 family. In terms of assembly, part of the 30S ribosomal subunit.

It localises to the plastid. The protein localises to the chloroplast. This chain is Small ribosomal subunit protein uS11c, found in Tupiella akineta (Green alga).